A 345-amino-acid chain; its full sequence is Fructose-1,6-bisphosphatase class 1 1 (345 aa).

The Mg(2+) site is built by Glu-90, Asp-109, Leu-111, and Asp-112. Substrate-binding positions include 112-115 and Asn-200; that span reads DGSS. A Mg(2+)-binding site is contributed by Glu-272.

It belongs to the FBPase class 1 family. Homotetramer. Mg(2+) serves as cofactor.

It is found in the cytoplasm. It carries out the reaction beta-D-fructose 1,6-bisphosphate + H2O = beta-D-fructose 6-phosphate + phosphate. It functions in the pathway carbohydrate biosynthesis; gluconeogenesis. The protein is Fructose-1,6-bisphosphatase class 1 1 of Nitrobacter hamburgensis (strain DSM 10229 / NCIMB 13809 / X14).